The following is a 166-amino-acid chain: NAD(P)H-quinone oxidoreductase subunit I, chloroplastic (166 aa).

4Fe-4S ferredoxin-type domains are found at residues 55 to 84 (GRIH…VDWK) and 95 to 124 (LNYS…MTEE). [4Fe-4S] cluster contacts are provided by Cys64, Cys67, Cys70, Cys74, Cys104, Cys107, Cys110, and Cys114.

It belongs to the complex I 23 kDa subunit family. In terms of assembly, NDH is composed of at least 16 different subunits, 5 of which are encoded in the nucleus. [4Fe-4S] cluster serves as cofactor.

The protein localises to the plastid. The protein resides in the chloroplast thylakoid membrane. The enzyme catalyses a plastoquinone + NADH + (n+1) H(+)(in) = a plastoquinol + NAD(+) + n H(+)(out). The catalysed reaction is a plastoquinone + NADPH + (n+1) H(+)(in) = a plastoquinol + NADP(+) + n H(+)(out). Functionally, NDH shuttles electrons from NAD(P)H:plastoquinone, via FMN and iron-sulfur (Fe-S) centers, to quinones in the photosynthetic chain and possibly in a chloroplast respiratory chain. The immediate electron acceptor for the enzyme in this species is believed to be plastoquinone. Couples the redox reaction to proton translocation, and thus conserves the redox energy in a proton gradient. The sequence is that of NAD(P)H-quinone oxidoreductase subunit I, chloroplastic from Sigesbeckia blakei.